We begin with the raw amino-acid sequence, 211 residues long: Potassium-transporting ATPase KdpC subunit (211 aa).

The chain crosses the membrane as a helical span at residues valine 13 to phenylalanine 35.

It belongs to the KdpC family. As to quaternary structure, the system is composed of three essential subunits: KdpA, KdpB and KdpC.

It localises to the cell membrane. In terms of biological role, part of the high-affinity ATP-driven potassium transport (or Kdp) system, which catalyzes the hydrolysis of ATP coupled with the electrogenic transport of potassium into the cytoplasm. This subunit acts as a catalytic chaperone that increases the ATP-binding affinity of the ATP-hydrolyzing subunit KdpB by the formation of a transient KdpB/KdpC/ATP ternary complex. This is Potassium-transporting ATPase KdpC subunit from Myxococcus xanthus.